Reading from the N-terminus, the 780-residue chain is Subtilisin-like protease SBT1.3 (780 aa).

Residues M1–A25 form the signal peptide. The propeptide at E26–H120 is activation peptide. The Inhibitor I9 domain maps to T36–H120. Residues R116–T628 form the Peptidase S8 domain. Catalysis depends on D154, which acts as the Charge relay system. The N-linked (GlcNAc...) asparagine glycan is linked to N165. Catalysis depends on H227, which acts as the Charge relay system. Residues K384–Q477 form the PA domain. An N-linked (GlcNAc...) asparagine glycan is attached at N394. S560 (charge relay system) is an active-site residue. Residues N663 and N731 are each glycosylated (N-linked (GlcNAc...) asparagine).

This sequence belongs to the peptidase S8 family.

The protein resides in the secreted. This Arabidopsis thaliana (Mouse-ear cress) protein is Subtilisin-like protease SBT1.3.